The chain runs to 229 residues: N-acetyltransferase MPR1 (229 aa).

The N-acetyltransferase domain occupies 65–219 (FNLEIESGKT…DAIIYGKDLT (155 aa)). Asn135 serves as a coordination point for substrate. 145–150 (RGQKVG) serves as a coordination point for CoA. Position 172–173 (172–173 (NL)) interacts with substrate.

It belongs to the acetyltransferase family. As to quaternary structure, homodimer. Not glycosylated.

The protein localises to the cytoplasm. It localises to the mitochondrion. It carries out the reaction L-glutamate 5-semialdehyde + acetyl-CoA = N-acetyl-L-glutamate 5-semialdehyde + CoA + H(+). N-acetyltransferase involved in oxidative stress resistance. Acetylates the toxic proline metabolism intermediate (S)-1-pyrroline-5-carboxylate (P5C), or more likely its spontaneously forming tautomer glutamate-5-semialdehyde (GSA) into N-acetyl-GSA for arginine synthesis in the mitochondria. P5C has been shown to increase the levels of reactive oxygen species (ROS) in the cell by inhibiting the function of the respiratory chain in the mitochondria. The enzyme is able to reduce intracellular ROS levels under P5C-induced oxidative stress and protects cells from damage by oxidative stress. Also acetylates and thereby detoxifies the proline analog azetidine-2-carboxylate (AZC), however it is unlikely that AZC is a natural substrate as it occurs only in plants belonging to the Lilaceae family. Does not acetylate proline. The chain is N-acetyltransferase MPR1 from Saccharomyces cerevisiae (Baker's yeast).